The following is a 246-amino-acid chain: 1-(5-phosphoribosyl)-5-[(5-phosphoribosylamino)methylideneamino] imidazole-4-carboxamide isomerase (246 aa).

D12 acts as the Proton acceptor in catalysis. D134 acts as the Proton donor in catalysis.

The protein belongs to the HisA/HisF family.

The protein localises to the cytoplasm. The catalysed reaction is 1-(5-phospho-beta-D-ribosyl)-5-[(5-phospho-beta-D-ribosylamino)methylideneamino]imidazole-4-carboxamide = 5-[(5-phospho-1-deoxy-D-ribulos-1-ylimino)methylamino]-1-(5-phospho-beta-D-ribosyl)imidazole-4-carboxamide. It participates in amino-acid biosynthesis; L-histidine biosynthesis; L-histidine from 5-phospho-alpha-D-ribose 1-diphosphate: step 4/9. This is 1-(5-phosphoribosyl)-5-[(5-phosphoribosylamino)methylideneamino] imidazole-4-carboxamide isomerase from Haloarcula marismortui (strain ATCC 43049 / DSM 3752 / JCM 8966 / VKM B-1809) (Halobacterium marismortui).